Consider the following 428-residue polypeptide: MFIDIAKVFIKSGKGGDGAISFRREKYVPLGGPNGGDGGDGGDIILKVDTGITTLLDFKYKKKFIAEDGENGGASKCYGRAGKDLIIKVPMGTIIREEESNKVIVDLSHKDQEFVLVKGGKGGKGNAKFATPTRQAPHYAEPGMPGDELSIVLELKLLADVGLLGFPNVGKSTLLSMTTKATPKIANYHFTTLKPNLGVVAVDGIEPFVMADIPGIIEGAAEGVGLGIQFLKHIERTRLLVHIVDISGLEGREPFEDFVKINEELKKYSVKLWDRPQIVVANKSDLLYDDEVFEEFERKVKELGFAKVYKMSAATRDGVDEVIKEAARMLKEIPVKELEISEDEMYIPEEKKFTYAIDIEKDEEYNTYVISGTFVDRLLSAVNIHDADSLRYFHKVLRNKGIMNELREMGIEDGDVVRLNDFEFEYLL.

The region spanning 1–158 (MFIDIAKVFI…LSIVLELKLL (158 aa)) is the Obg domain. The OBG-type G domain occupies 159-331 (ADVGLLGFPN…VIKEAARMLK (173 aa)). GTP is bound by residues 165–172 (GFPNVGKS), 190–194 (FTTLK), 212–215 (DIPG), 282–285 (NKSD), and 312–314 (SAA). Mg(2+) is bound by residues Ser172 and Thr192. The OCT domain maps to 345–428 (MYIPEEKKFT…LNDFEFEYLL (84 aa)).

Belongs to the TRAFAC class OBG-HflX-like GTPase superfamily. OBG GTPase family. As to quaternary structure, monomer. Mg(2+) is required as a cofactor.

The protein localises to the cytoplasm. Its function is as follows. An essential GTPase which binds GTP, GDP and possibly (p)ppGpp with moderate affinity, with high nucleotide exchange rates and a fairly low GTP hydrolysis rate. Plays a role in control of the cell cycle, stress response, ribosome biogenesis and in those bacteria that undergo differentiation, in morphogenesis control. The sequence is that of GTPase Obg from Clostridium botulinum (strain Alaska E43 / Type E3).